Here is a 475-residue protein sequence, read N- to C-terminus: MSPQTETKASVGFKAGVKDYKLTYHTPDYETKDTDILAAFRVTPQPGVPPEEAGAAVAAESSTGTWTTVWTDGLTSLDRYKGRCYHIEPVAGEESQFIAYVAYPLDLFEEGSVTNMFTSIVGNVFGFKALRALRLEDLRIPPAYSKTFQGPPHGIQVERDKLNKYGRPLLGCTIKPKLGLSAKNYGRAVYECLRGGLDFTKDDENVNSQPFMRWRDRFLFCAEAIYKAQAETGEIKGHYLNATAGTCEEMMKRAVFARELGVPIVMHDYLTGGFTANTSLAHYCRDNGLLLHIHRAMHAVIDRQKNHGIHFRVLAKALRMSGGDHIHAGTVVGKLEGEREITLGFVDLLRDDYIEKDRSRGIYFTQDWVSLPGVLPVASGGIHVWHMPALTEIFGDDSVLQFGGGTLGHPWGNAPGAVANRVALEACVQARNEGRDLAREGNEIIREAAKWSPELAAACEVWKEIKFEFPAMDTL.

The propeptide occupies 1-2 (MS). Pro-3 carries the post-translational modification N-acetylproline. Lys-14 carries the N6,N6,N6-trimethyllysine modification. Substrate is bound by residues Asn-123 and Thr-173. Lys-175 (proton acceptor) is an active-site residue. Position 177 (Lys-177) interacts with substrate. Mg(2+) is bound by residues Lys-201, Asp-203, and Glu-204. N6-carboxylysine is present on Lys-201. Catalysis depends on His-294, which acts as the Proton acceptor. Substrate-binding residues include Arg-295, His-327, and Ser-379.

Belongs to the RuBisCO large chain family. Type I subfamily. Heterohexadecamer of 8 large chains and 8 small chains; disulfide-linked. The disulfide link is formed within the large subunit homodimers. It depends on Mg(2+) as a cofactor. In terms of processing, the disulfide bond which can form in the large chain dimeric partners within the hexadecamer appears to be associated with oxidative stress and protein turnover.

The protein localises to the plastid. It is found in the chloroplast. The enzyme catalyses 2 (2R)-3-phosphoglycerate + 2 H(+) = D-ribulose 1,5-bisphosphate + CO2 + H2O. It carries out the reaction D-ribulose 1,5-bisphosphate + O2 = 2-phosphoglycolate + (2R)-3-phosphoglycerate + 2 H(+). Functionally, ruBisCO catalyzes two reactions: the carboxylation of D-ribulose 1,5-bisphosphate, the primary event in carbon dioxide fixation, as well as the oxidative fragmentation of the pentose substrate in the photorespiration process. Both reactions occur simultaneously and in competition at the same active site. The polypeptide is Ribulose bisphosphate carboxylase large chain (Alnus incana (White alder)).